Reading from the N-terminus, the 127-residue chain is Small ribosomal subunit protein uS11 (127 aa).

Belongs to the universal ribosomal protein uS11 family. As to quaternary structure, part of the 30S ribosomal subunit. Interacts with proteins S7 and S18. Binds to IF-3.

Its function is as follows. Located on the platform of the 30S subunit, it bridges several disparate RNA helices of the 16S rRNA. Forms part of the Shine-Dalgarno cleft in the 70S ribosome. This is Small ribosomal subunit protein uS11 from Pelodictyon phaeoclathratiforme (strain DSM 5477 / BU-1).